Here is a 363-residue protein sequence, read N- to C-terminus: MKATIRNKLERMAERHEEIGAQLADPDVVGDPSKFAELSREYARLEPVVQDLNAYRAEADTVASAEAMLNDGDAEIRALAEQELAEAQRRLEELEGALQRHLVPTDPNDQRNIFLEVRAGAGGDEAALFAGDLLRMYMRYAERQGWKTEILSAREGEHGGYREVIARVSGRSVYARLKFESGAHRVQRVPATESQGRIHTSACTVAILPELDEVSAIEVNTADLRVDTFRSSGAGGQHVNTTDSAIRITHLPSGLVVECQDERSQNKNRAKAIALLQARLTEQERAKQQSERSEQRRLAVGSGDRSERIRTYNFPQGRVTDHRIGLTLYKLEQVMEGGMDELLDGLTQEHQAEALAEIAEDSG.

The residue at position 237 (Q237) is an N5-methylglutamine. A compositionally biased stretch (basic and acidic residues) spans 284–297 (ERAKQQSERSEQRR). The segment at 284 to 306 (ERAKQQSERSEQRRLAVGSGDRS) is disordered.

Belongs to the prokaryotic/mitochondrial release factor family. In terms of processing, methylated by PrmC. Methylation increases the termination efficiency of RF1.

The protein localises to the cytoplasm. Its function is as follows. Peptide chain release factor 1 directs the termination of translation in response to the peptide chain termination codons UAG and UAA. The sequence is that of Peptide chain release factor 1 from Halorhodospira halophila (strain DSM 244 / SL1) (Ectothiorhodospira halophila (strain DSM 244 / SL1)).